We begin with the raw amino-acid sequence, 482 residues long: Bifunctional protein GlmU (482 aa).

A pyrophosphorylase region spans residues 1–241 (MTASTEAAVV…SALVTGVNDR (241 aa)). UDP-N-acetyl-alpha-D-glucosamine-binding positions include 12–15 (LAAG), lysine 26, glutamine 83, 88–89 (GT), 112–114 (SGD), glycine 151, glutamate 166, asparagine 181, and asparagine 239. Aspartate 114 lines the Mg(2+) pocket. Asparagine 239 contacts Mg(2+). The interval 242–262 (VQLSDLGKVLNRRIVAAHQRA) is linker. An N-acetyltransferase region spans residues 263-482 (GVTIIDPGST…AARKALGDES (220 aa)). UDP-N-acetyl-alpha-D-glucosamine is bound by residues arginine 344 and lysine 362. The active-site Proton acceptor is the histidine 374. UDP-N-acetyl-alpha-D-glucosamine-binding residues include tyrosine 377 and asparagine 388. Acetyl-CoA is bound by residues alanine 391, 397–398 (NY), serine 416, and alanine 434. The interval 463–482 (KKRPGSAADKAARKALGDES) is disordered. The segment covering 472 to 482 (KAARKALGDES) has biased composition (basic and acidic residues).

In the N-terminal section; belongs to the N-acetylglucosamine-1-phosphate uridyltransferase family. This sequence in the C-terminal section; belongs to the transferase hexapeptide repeat family. As to quaternary structure, homotrimer. It depends on Mg(2+) as a cofactor.

Its subcellular location is the cytoplasm. The enzyme catalyses alpha-D-glucosamine 1-phosphate + acetyl-CoA = N-acetyl-alpha-D-glucosamine 1-phosphate + CoA + H(+). The catalysed reaction is N-acetyl-alpha-D-glucosamine 1-phosphate + UTP + H(+) = UDP-N-acetyl-alpha-D-glucosamine + diphosphate. The protein operates within nucleotide-sugar biosynthesis; UDP-N-acetyl-alpha-D-glucosamine biosynthesis; N-acetyl-alpha-D-glucosamine 1-phosphate from alpha-D-glucosamine 6-phosphate (route II): step 2/2. It participates in nucleotide-sugar biosynthesis; UDP-N-acetyl-alpha-D-glucosamine biosynthesis; UDP-N-acetyl-alpha-D-glucosamine from N-acetyl-alpha-D-glucosamine 1-phosphate: step 1/1. Its pathway is bacterial outer membrane biogenesis; LPS lipid A biosynthesis. Its function is as follows. Catalyzes the last two sequential reactions in the de novo biosynthetic pathway for UDP-N-acetylglucosamine (UDP-GlcNAc). The C-terminal domain catalyzes the transfer of acetyl group from acetyl coenzyme A to glucosamine-1-phosphate (GlcN-1-P) to produce N-acetylglucosamine-1-phosphate (GlcNAc-1-P), which is converted into UDP-GlcNAc by the transfer of uridine 5-monophosphate (from uridine 5-triphosphate), a reaction catalyzed by the N-terminal domain. The polypeptide is Bifunctional protein GlmU (Mycolicibacterium smegmatis (strain ATCC 700084 / mc(2)155) (Mycobacterium smegmatis)).